Here is a 466-residue protein sequence, read N- to C-terminus: Amino acid permease 4 (466 aa).

The Cytoplasmic segment spans residues 1–22; it reads MDVPRPAFKCFDDDGRLKRSGT. A run of 2 helical transmembrane segments spans residues 23–43 and 44–64; these read VWTA…LSLA and WAIG…FSFV. Topologically, residues 65–111 are cytoplasmic; that stretch reads TYYSSTLLSDCYRTGDPVSGKRNYTYMDAVRSILGGFRFKICGLIQY. A helical transmembrane segment spans residues 112–132; the sequence is LNLFGITVGYTIAASISMMAI. Residues 133-177 are Extracellular-facing; that stretch reads KRSNCFHESGGKNPCHMSSNPYMIMFGVTEILLSQIKDFDQIWWL. A helical membrane pass occupies residues 178–198; the sequence is SIVAAIMSFTYSAIGLALGII. At 199–226 the chain is on the cytoplasmic side; sequence QVAANGVVKGSLTGISIGAVTQTQKIWR. Residues 227–247 form a helical membrane-spanning segment; sequence TFQALGDIAFAYSYSVVLIEI. Residues 248-266 lie on the Extracellular side of the membrane; that stretch reads QDTVRSPPAESKTMKIATR. The chain crosses the membrane as a helical span at residues 267-287; it reads ISIAVTTTFYMLCGCMGYAAF. The Cytoplasmic portion of the chain corresponds to 288–290; that stretch reads GDK. A helical transmembrane segment spans residues 291–311; that stretch reads APGNLLTGFGFYNPFWLLDVA. At 312 to 313 the chain is on the extracellular side; sequence NA. The helical transmembrane segment at 314-334 threads the bilayer; sequence AIVIHLVGAYQVFAQPIFAFI. Residues 335–369 are Cytoplasmic-facing; that stretch reads EKQAAARFPDSDLVTKEYEIRIPGFRSPYKVNVFR. A helical transmembrane segment spans residues 370–390; the sequence is AVYRSGFVVLTTVISMLMPFF. At 391–392 the chain is on the extracellular side; that stretch reads ND. Residues 393–413 form a helical membrane-spanning segment; the sequence is VVGILGALGFWPLTVYFPVEM. Over 414-435 the chain is Cytoplasmic; the sequence is YIRQRKVERWSMKWVCLQMLSC. Residues 436 to 456 traverse the membrane as a helical segment; the sequence is GCLMITLVAGVGSIAGVMLDL. At 457 to 466 the chain is on the extracellular side; it reads KVYKPFKTTY.

Belongs to the amino acid/polyamine transporter 2 family. Amino acid/auxin permease (AAAP) (TC 2.A.18.2) subfamily. As to expression, expressed in leaves, stems and flowers.

The protein localises to the cell membrane. With respect to regulation, inhibited by 2,4-dinitrophenol. In terms of biological role, amino acid-proton symporter. Stereospecific transporter with a broad specificity for neutral amino acids, favoring small amino acids such as alanine, asparagine and glutamine. Also accepts large aromatic residues such as in phenlalanine or tyrosine. The protein is Amino acid permease 4 (AAP4) of Arabidopsis thaliana (Mouse-ear cress).